Reading from the N-terminus, the 1899-residue chain is Protein TIC 214 (1899 aa).

6 helical membrane passes run 23–43 (VVVG…SYLF), 64–84 (FITG…HLAL), 87–107 (PHTI…WNNH), 124–144 (LSIQ…LFIL), 172–192 (VGWL…LVCI), and 217–237 (WTAR…LGVH). Disordered regions lie at residues 256-280 (EQKK…TKKE) and 1581-1619 (PKDY…GLDL). A compositionally biased stretch (basic and acidic residues) spans 269 to 280 (EKTFETKETKKE).

It belongs to the TIC214 family. As to quaternary structure, part of the Tic complex.

It localises to the plastid. The protein resides in the chloroplast inner membrane. Functionally, involved in protein precursor import into chloroplasts. May be part of an intermediate translocation complex acting as a protein-conducting channel at the inner envelope. This is Protein TIC 214 from Ceratophyllum demersum (Rigid hornwort).